Reading from the N-terminus, the 222-residue chain is Protein-L-isoaspartate O-methyltransferase (222 aa).

Ser-67 is a catalytic residue.

It belongs to the methyltransferase superfamily. L-isoaspartyl/D-aspartyl protein methyltransferase family.

Its subcellular location is the cytoplasm. The catalysed reaction is [protein]-L-isoaspartate + S-adenosyl-L-methionine = [protein]-L-isoaspartate alpha-methyl ester + S-adenosyl-L-homocysteine. In terms of biological role, catalyzes the methyl esterification of L-isoaspartyl residues in peptides and proteins that result from spontaneous decomposition of normal L-aspartyl and L-asparaginyl residues. It plays a role in the repair and/or degradation of damaged proteins. This is Protein-L-isoaspartate O-methyltransferase from Parvibaculum lavamentivorans (strain DS-1 / DSM 13023 / NCIMB 13966).